A 292-amino-acid chain; its full sequence is ATP synthase gamma chain (292 aa).

The protein belongs to the ATPase gamma chain family. In terms of assembly, F-type ATPases have 2 components, CF(1) - the catalytic core - and CF(0) - the membrane proton channel. CF(1) has five subunits: alpha(3), beta(3), gamma(1), delta(1), epsilon(1). CF(0) has three main subunits: a, b and c.

It is found in the cell membrane. Functionally, produces ATP from ADP in the presence of a proton gradient across the membrane. The gamma chain is believed to be important in regulating ATPase activity and the flow of protons through the CF(0) complex. This Streptococcus mutans serotype c (strain ATCC 700610 / UA159) protein is ATP synthase gamma chain.